The primary structure comprises 21 residues: Ferredoxin (21 aa).

The 20-residue stretch at 2 to 21 (KVKVDADACIGCGVCVELCP) folds into the 4Fe-4S ferredoxin-type domain. 3 residues coordinate [4Fe-4S] cluster: Cys10, Cys13, and Cys16.

As to quaternary structure, monomer. The cofactor is [4Fe-4S] cluster.

In terms of biological role, ferredoxins are iron-sulfur proteins that transfer electrons in a wide variety of metabolic reactions. The protein is Ferredoxin (fdxA) of Pyrococcus woesei.